The sequence spans 276 residues: Undecaprenyl-diphosphatase 2 (276 aa).

8 consecutive transmembrane segments (helical) span residues 1–21 (MSLW…LFPV), 44–64 (QLLP…LWYF), 87–107 (GHLM…GLLL), 114–134 (VFHD…LLWL), 150–170 (MTFK…IPGF), 190–210 (AAEF…VLEL), 222–242 (DALL…RFLM), and 251–271 (LASF…WFML).

This sequence belongs to the UppP family.

It is found in the cell inner membrane. The enzyme catalyses di-trans,octa-cis-undecaprenyl diphosphate + H2O = di-trans,octa-cis-undecaprenyl phosphate + phosphate + H(+). Catalyzes the dephosphorylation of undecaprenyl diphosphate (UPP). Confers resistance to bacitracin. In Burkholderia orbicola (strain AU 1054), this protein is Undecaprenyl-diphosphatase 2.